The following is a 301-amino-acid chain: Probable enoyl-CoA hydratase 2, mitochondrial (301 aa).

A mitochondrion-targeting transit peptide spans 1–32; it reads MSFVKYLRRDNLLQLAGKPSLSRNYILQTCRT. Substrate is bound by residues 105 to 109 and Gly-152; that span reads AGADL.

The protein belongs to the enoyl-CoA hydratase/isomerase family.

It localises to the mitochondrion. The enzyme catalyses a (3S)-3-hydroxyacyl-CoA = a (2E)-enoyl-CoA + H2O. It catalyses the reaction a 4-saturated-(3S)-3-hydroxyacyl-CoA = a (3E)-enoyl-CoA + H2O. The protein operates within lipid metabolism; fatty acid beta-oxidation. Its function is as follows. Straight-chain enoyl-CoA thioesters from C4 up to at least C16 are processed, although with decreasing catalytic rate. This chain is Probable enoyl-CoA hydratase 2, mitochondrial, found in Arabidopsis thaliana (Mouse-ear cress).